A 609-amino-acid polypeptide reads, in one-letter code: UvrABC system protein C (609 aa).

A GIY-YIG domain is found at 13–91; the sequence is HEPGVYRMYD…IKLYQPRYNV (79 aa). The UVR domain maps to 201–236; it reads QQVLDYLIGKMEQASRNLDFEQAARYRDQIQAVRSV.

It belongs to the UvrC family. As to quaternary structure, interacts with UvrB in an incision complex.

The protein resides in the cytoplasm. Functionally, the UvrABC repair system catalyzes the recognition and processing of DNA lesions. UvrC both incises the 5' and 3' sides of the lesion. The N-terminal half is responsible for the 3' incision and the C-terminal half is responsible for the 5' incision. The protein is UvrABC system protein C of Haemophilus influenzae (strain ATCC 51907 / DSM 11121 / KW20 / Rd).